The primary structure comprises 426 residues: NADH-quinone oxidoreductase subunit F (426 aa).

65–74 (GRGGAGFPTG) lines the NAD(+) pocket. 176–223 (GAGAYICGEETALIESLEGKRGHPRLKPPYPVQKGLWGKPTVVNNVET) is an FMN binding site. Positions 347, 350, 353, and 393 each coordinate [4Fe-4S] cluster.

The protein belongs to the complex I 51 kDa subunit family. The cofactor is FMN. [4Fe-4S] cluster serves as cofactor.

The enzyme catalyses a quinone + NADH + 5 H(+)(in) = a quinol + NAD(+) + 4 H(+)(out). In terms of biological role, NDH-1 shuttles electrons from NADH, via FMN and iron-sulfur (Fe-S) centers, to quinones in the respiratory chain. Couples the redox reaction to proton translocation (for every two electrons transferred, four hydrogen ions are translocated across the cytoplasmic membrane), and thus conserves the redox energy in a proton gradient. In Aquifex aeolicus (strain VF5), this protein is NADH-quinone oxidoreductase subunit F (nuoF).